Here is an 87-residue protein sequence, read N- to C-terminus: Putative acyl-CoA-binding protein (87 aa).

The ACB domain maps to 1 to 86 (MSSTFEQAAA…VDELKTKYGM (86 aa)). An acyl-CoA is bound by residues lysine 13, 28-32 (YALFK), lysine 50, lysine 54, and tyrosine 73.

It belongs to the ACBP family.

It is found in the cytoplasm. Its subcellular location is the nucleus. Its function is as follows. Binds medium- and long-chain acyl-CoA esters with very high affinity and may function as an intracellular carrier of acyl-CoA esters. May enhance the activity of the ceramide synthase complex. The polypeptide is Putative acyl-CoA-binding protein (Schizosaccharomyces pombe (strain 972 / ATCC 24843) (Fission yeast)).